The sequence spans 191 residues: Transcription factor FapR (191 aa).

It belongs to the FapR family.

Functionally, transcriptional factor involved in regulation of membrane lipid biosynthesis by repressing genes involved in fatty acid and phospholipid metabolism. This is Transcription factor FapR from Oceanobacillus iheyensis (strain DSM 14371 / CIP 107618 / JCM 11309 / KCTC 3954 / HTE831).